Here is a 224-residue protein sequence, read N- to C-terminus: Putative O-methyltransferase MUL_4520 (224 aa).

The segment covering 1 to 11 (MHGTDSSSDTP) has biased composition (polar residues). The tract at residues 1 to 20 (MHGTDSSSDTPGQPAPSRAE) is disordered. Residues Val-51, Glu-73, 75 to 76 (GT), Ser-81, Asp-99, and Ile-100 each bind S-adenosyl-L-methionine. A substrate-binding site is contributed by Asp-147. S-adenosyl-L-methionine is bound at residue Asp-149.

This sequence belongs to the class I-like SAM-binding methyltransferase superfamily. Cation-dependent O-methyltransferase family.

This chain is Putative O-methyltransferase MUL_4520, found in Mycobacterium ulcerans (strain Agy99).